Here is a 310-residue protein sequence, read N- to C-terminus: Flavin-dependent trigonelline monooxygenase, reductase component (310 aa).

FMN contacts are provided by residues 40–43 (TANS), 57–63 (SIAKTSS), 90–91 (FA), and Arg97.

It belongs to the non-flavoprotein flavin reductase family. Homodimer. The trigonelline monooxygenase is composed of a reductase component TgnA and an oxygenase component TgnB.

The catalysed reaction is a reduced flavin + NAD(+) = an oxidized flavin + NADH + 2 H(+). The enzyme catalyses FADH2 + NAD(+) = FAD + NADH + 2 H(+). It catalyses the reaction FMNH2 + NAD(+) = FMN + NADH + 2 H(+). Its activity is regulated as follows. Maximal reductase activity is achieved only upon trigonelline (TG) binding to the reductase component before interaction with NADH. It seems that TgnA undergoes an allosteric transition upon trigonelline (TG) binding accounting for the positive cooperativity toward NADH oxidation. Involved in the degradation of the pyridine ring of trigonelline (TG; N-methylnicotinate) into succinate and methylamine as carbon and nitrogen sources, respectively. TgnA catalyzes the reduction of flavin (FMN or FAD) by NADH and supplies the reduced flavin to the oxygenase component TgnB. The protein is Flavin-dependent trigonelline monooxygenase, reductase component of Acinetobacter baylyi (strain ATCC 33305 / BD413 / ADP1).